Reading from the N-terminus, the 517-residue chain is FAD-dependent monooxygenase FUP4 (517 aa).

A signal peptide spans methionine 1–alanine 19. In terms of domain architecture, FAD-binding PCMH-type spans glutamine 75 to glutamine 246. Histidine 112 bears the Pros-8alpha-FAD histidine mark. N-linked (GlcNAc...) asparagine glycans are attached at residues asparagine 163, asparagine 208, and asparagine 346.

The protein belongs to the oxygen-dependent FAD-linked oxidoreductase family. The cofactor is FAD.

It participates in secondary metabolite biosynthesis; terpenoid biosynthesis. Functionally, FAD-dependent monooxygenase; part of the gene cluster that mediates the biosynthesis of the mycotoxin fusaproliferin (FUP) that belongs to the class of bicyclic sesterterpenoids. FUP4 catalyzes the oxidation of the hydroxy group at the C-16 position of preterpestacin III to a keto group, leading to the formation of (-)-terpestacin. The product of FUP1, preterpestacin I, might also serve as a substrate of FUP4 to yield oxo-preterpestacin I. The FUP biosynthetic pathway starts with the enzyme encoded by FUP1 that combines a C-terminal prenyltransferase domain responsible for the synthesis of geranylgeranyl diphosphate with the N-terminal terpene cyclase domain, to yield preterpestacin I. Preterpestacin I is then decorated by oxygenation steps that are catalyzed by two cytochrome P450 monooxygenases. First, FUP2 introduces a hydroxyl group at the C-24 position resulting in the formation of preterpestacin IIa. The second P450 monooxygenase catalyzes the hydroxylation at C-16 and C-17 of preterpestacin IIa, producing preterpestacin III. Subsequently, the FAD-dependent oxidoreductase FUP4 catalyzes the oxidation of the hydroxy group at the C-16 position to a keto group, leading to the formation of (-)-terpestacin, which is the immediate precursor of FUP. The final step in the proposed biosynthetic pathway is the addition of an acetyl group at the C-24 position of terpestacin, which is catalyzed by the acetyltransferase FUP5. In Fusarium proliferatum (strain ET1) (Orchid endophyte fungus), this protein is FAD-dependent monooxygenase FUP4.